A 297-amino-acid polypeptide reads, in one-letter code: Large ribosomal subunit protein uL18 (297 aa).

Belongs to the universal ribosomal protein uL18 family. Component of the large ribosomal subunit (LSU).

The protein localises to the cytoplasm. The protein resides in the nucleus. Functionally, component of the ribosome, a large ribonucleoprotein complex responsible for the synthesis of proteins in the cell. The small ribosomal subunit (SSU) binds messenger RNAs (mRNAs) and translates the encoded message by selecting cognate aminoacyl-transfer RNA (tRNA) molecules. The large subunit (LSU) contains the ribosomal catalytic site termed the peptidyl transferase center (PTC), which catalyzes the formation of peptide bonds, thereby polymerizing the amino acids delivered by tRNAs into a polypeptide chain. The nascent polypeptides leave the ribosome through a tunnel in the LSU and interact with protein factors that function in enzymatic processing, targeting, and the membrane insertion of nascent chains at the exit of the ribosomal tunnel. The polypeptide is Large ribosomal subunit protein uL18 (RpL5) (Lysiphlebus testaceipes (Greenbugs aphid parastoid)).